Reading from the N-terminus, the 100-residue chain is MAKKALIARETKRQKLVQKYAAKRLEFKERIRTAESIREVVSIQREFQGLPRNSSKVRLKNRCAKTGRPKGYYRDFGLSRHVLREMAHQGLLPGVRKASW.

Belongs to the universal ribosomal protein uS14 family. In terms of assembly, part of the 30S ribosomal subunit.

The protein resides in the plastid. It is found in the chloroplast. Functionally, binds 16S rRNA, required for the assembly of 30S particles. This chain is Small ribosomal subunit protein uS14c, found in Ostreococcus tauri.